Reading from the N-terminus, the 455-residue chain is E3 ubiquitin-protein ligase IPI1 (455 aa).

Residues 1–42 (MGAEEEEEPASAVGREGGGGGGGARAAGAGAGGDTADDDDSG) form a disordered region. Over residues 15-33 (REGGGGGGGARAAGAGAGG) the composition is skewed to gly residues. Residues 51–97 (CSICLDAVVAGGGDRSTARLQCGHEFHLDCIGSAFNAKGVMQCPNCR) form an RING-type; atypical zinc finger. 2 disordered regions span residues 286-311 (LDSDSQQRGSLPSVYGNGSGSRSRIP) and 426-455 (QWIGAGRSPPPPPPPPADNSSYRQMHIPRM). Over residues 433 to 442 (SPPPPPPPPA) the composition is skewed to pro residues.

In terms of assembly, interacts with SPL14/IPA1.

It localises to the nucleus. The enzyme catalyses S-ubiquitinyl-[E2 ubiquitin-conjugating enzyme]-L-cysteine + [acceptor protein]-L-lysine = [E2 ubiquitin-conjugating enzyme]-L-cysteine + N(6)-ubiquitinyl-[acceptor protein]-L-lysine.. Its pathway is protein modification; protein ubiquitination. In terms of biological role, functions as an E3 ligase that promotes polyubiquitination of SPL14/IPA1 for subsequent proteasomal degradation. Regulates plant architecture by modulating SPL14/IPA1 abundance. Promotes the degradation of SPL14/IPA1 in panicles, while it stabilizes SPL14/IPA1 in shoot apices. Ubiquitinates the SPL14/IPA1-mediated complex with 'Lys-48'-linked polyubiquitin in panicles and 'Lys-63'-linked polyubiquitin chains in the shoot apex. The sequence is that of E3 ubiquitin-protein ligase IPI1 from Oryza sativa subsp. japonica (Rice).